Reading from the N-terminus, the 168-residue chain is MAPSLSPIRSHHVAVIGAGAAGLVAARELRREGHSVVVFERQKQVGGTWIYTDHIEPDPLSVDPTRSVVHSSVYGSLRTNLPRECMGYRDFPFVVRSGVSESRDPRRFPSHGEVLAYLQDFAKEFAIEEMIRFDTAVVKVAPAAEEGSGKWRIESTEKEKKKWAHRAV.

17 to 22 contacts FAD; that stretch reads GAGAAG.

Belongs to the FMO family. The cofactor is FAD.

Catalyzes the conversion of methylthioalkyl glucosinolates of any chain length into methylsulfinylalkyl glucosinolates. The protein is Putative flavin-containing monooxygenase FMO GS-OX-like 11 of Arabidopsis thaliana (Mouse-ear cress).